Reading from the N-terminus, the 120-residue chain is NAD(P)H-quinone oxidoreductase subunit 3, chloroplastic (120 aa).

3 consecutive transmembrane segments (helical) span residues 9-29, 62-82, and 88-108; these read IFWA…FLSG, YYMF…LYPW, and VLGV…IVGL.

The protein belongs to the complex I subunit 3 family. NDH is composed of at least 16 different subunits, 5 of which are encoded in the nucleus.

Its subcellular location is the plastid. It localises to the chloroplast thylakoid membrane. It carries out the reaction a plastoquinone + NADH + (n+1) H(+)(in) = a plastoquinol + NAD(+) + n H(+)(out). The enzyme catalyses a plastoquinone + NADPH + (n+1) H(+)(in) = a plastoquinol + NADP(+) + n H(+)(out). Its function is as follows. NDH shuttles electrons from NAD(P)H:plastoquinone, via FMN and iron-sulfur (Fe-S) centers, to quinones in the photosynthetic chain and possibly in a chloroplast respiratory chain. The immediate electron acceptor for the enzyme in this species is believed to be plastoquinone. Couples the redox reaction to proton translocation, and thus conserves the redox energy in a proton gradient. The sequence is that of NAD(P)H-quinone oxidoreductase subunit 3, chloroplastic from Trachelium caeruleum (Blue throatwort).